Here is a 237-residue protein sequence, read N- to C-terminus: Alpha-S1-casein (237 aa).

The N-terminal stretch at 1 to 15 (MKLLIFSCLVTLALA) is a signal peptide. The disordered stretch occupies residues 39–60 (EDPIPVSEASSSEESVHQLNRD). Residues Ser-79, Ser-80, and Ser-81 each carry the phosphoserine modification.

Belongs to the alpha-casein family. Mammary gland specific. Secreted in milk.

It localises to the secreted. Important role in the capacity of milk to transport calcium phosphate. This chain is Alpha-S1-casein (CSN1S1), found in Notamacropus eugenii (Tammar wallaby).